A 91-amino-acid polypeptide reads, in one-letter code: DNA-directed RNA polymerase subunit omega (91 aa).

It belongs to the RNA polymerase subunit omega family. In terms of assembly, the RNAP catalytic core consists of 2 alpha, 1 beta, 1 beta' and 1 omega subunit. When a sigma factor is associated with the core the holoenzyme is formed, which can initiate transcription.

It carries out the reaction RNA(n) + a ribonucleoside 5'-triphosphate = RNA(n+1) + diphosphate. Functionally, promotes RNA polymerase assembly. Latches the N- and C-terminal regions of the beta' subunit thereby facilitating its interaction with the beta and alpha subunits. This is DNA-directed RNA polymerase subunit omega from Shigella flexneri.